The primary structure comprises 469 residues: Putative dipeptidase SAR1836 (469 aa).

H84 is a Zn(2+) binding site. D86 is a catalytic residue. Position 115 (D115) interacts with Zn(2+). E149 functions as the Proton acceptor in the catalytic mechanism. Positions 150, 173, and 440 each coordinate Zn(2+).

The protein belongs to the peptidase M20A family. The cofactor is Zn(2+).

The protein is Putative dipeptidase SAR1836 of Staphylococcus aureus (strain MRSA252).